Reading from the N-terminus, the 380-residue chain is MVGFGANRRAGRLPSLVLAVLLVVIAVLAFNYWSISSRHVLLQEEVAELQGQVQRTEVARGRLEKRNSDLLLLVDSHKKQIDQKEADYGRLSSRLQAREGLGKRCEDDKVKLQNNISYQMADIHHLKEQLAELRQEFLRQEDQLQDYRKNNTYLVKRLEYESFQCGQQIKELRAQHEENIKKLADQFLQEQKQEAHKFESKGGNELDTDNHAVPKNIPEVAENGAGKNEEPSSHHIPHGKEQIKRGGDAGMPGIEENDLAKAEDVPVALKKPPVSFSQYESHQVISHLPTGQPLSPNMVPDSHINHNGNSRTSKQNPSNPLQRLIPGPNLENEPRIQAEVLKQATKDRAGDFHKLKQNDEERELQMDPADYGKQRFNDAL.

Residue methionine 1 is modified to N-acetylmethionine. Residues 1 to 14 (MVGFGANRRAGRLP) are Cytoplasmic-facing. A helical; Signal-anchor for type II membrane protein membrane pass occupies residues 15 to 35 (SLVLAVLLVVIAVLAFNYWSI). The stretch at 35–195 (ISSRHVLLQE…QFLQEQKQEA (161 aa)) forms a coiled coil. The Lumenal segment spans residues 36 to 380 (SSRHVLLQEE…YGKQRFNDAL (345 aa)). Composition is skewed to basic and acidic residues over residues 192 to 212 (KQEA…DNHA) and 227 to 247 (KNEE…KRGG). The disordered stretch occupies residues 192–254 (KQEAHKFESK…RGGDAGMPGI (63 aa)). Serine 233 and serine 275 each carry phosphoserine. Positions 280–380 (ESHQVISHLP…YGKQRFNDAL (101 aa)) are disordered. Positions 305 to 321 (NHNGNSRTSKQNPSNPL) are enriched in polar residues. Basic and acidic residues predominate over residues 344-380 (ATKDRAGDFHKLKQNDEERELQMDPADYGKQRFNDAL).

Belongs to the GOLM family.

It localises to the membrane. The polypeptide is Protein GOLM2 (GOLM2) (Bos taurus (Bovine)).